Reading from the N-terminus, the 206-residue chain is Small ribosomal subunit protein uS5 (206 aa).

The disordered stretch occupies residues 1–42 (MENKTEVVVAENANNQTQPERKKFDRKPNRRPQGPKQFQKDD). The 64-residue stretch at 43–106 (FEEKVVTIRR…KEAKKNLIRV (64 aa)) folds into the S5 DRBM domain.

This sequence belongs to the universal ribosomal protein uS5 family. Part of the 30S ribosomal subunit. Contacts proteins S4 and S8.

Functionally, with S4 and S12 plays an important role in translational accuracy. Its function is as follows. Located at the back of the 30S subunit body where it stabilizes the conformation of the head with respect to the body. In Mesoplasma florum (strain ATCC 33453 / NBRC 100688 / NCTC 11704 / L1) (Acholeplasma florum), this protein is Small ribosomal subunit protein uS5.